Consider the following 157-residue polypeptide: Peptide methionine sulfoxide reductase MsrA (157 aa).

Cys-10 is a catalytic residue.

It belongs to the MsrA Met sulfoxide reductase family.

The catalysed reaction is L-methionyl-[protein] + [thioredoxin]-disulfide + H2O = L-methionyl-(S)-S-oxide-[protein] + [thioredoxin]-dithiol. It carries out the reaction [thioredoxin]-disulfide + L-methionine + H2O = L-methionine (S)-S-oxide + [thioredoxin]-dithiol. Its function is as follows. Has an important function as a repair enzyme for proteins that have been inactivated by oxidation. Catalyzes the reversible oxidation-reduction of methionine sulfoxide in proteins to methionine. This chain is Peptide methionine sulfoxide reductase MsrA, found in Clostridium perfringens (strain 13 / Type A).